The primary structure comprises 726 residues: NHL repeat-containing protein 2 (726 aa).

The Thioredoxin domain maps to 43–200 (QKVDGWEQDL…TSIALKYYKD (158 aa)). NHL repeat units lie at residues 212–254 (KLYK…VWKN), 265–307 (NPGR…IDLE), 335–369 (ISSP…IWAL), 409–439 (FAQP…VRTV), 461–505 (AFGD…VDPK), and 518–562 (TNNV…MDLE).

Monomer. As to expression, ubiquitous. Detected in heart, kidney, muscle, brain, lung, liver and in skin fibroblasts (at protein level).

It localises to the cytoplasm. The protein localises to the cytosol. In terms of biological role, required for normal embryonic development. The sequence is that of NHL repeat-containing protein 2 (NHLRC2) from Homo sapiens (Human).